Consider the following 299-residue polypeptide: Coenzyme PQQ synthesis protein B (299 aa).

It belongs to the PqqB family.

It functions in the pathway cofactor biosynthesis; pyrroloquinoline quinone biosynthesis. Its function is as follows. May be involved in the transport of PQQ or its precursor to the periplasm. The protein is Coenzyme PQQ synthesis protein B of Methylorubrum extorquens (strain PA1) (Methylobacterium extorquens).